The chain runs to 252 residues: Secreted LysM effector LysM1 (252 aa).

The LysM 1 domain maps to 20-64 (FAIPGDPGDTCDTLSDRWGITIDIFKSLNPGVNCPNLVANMEYCV). Residues 71–98 (DTPSTTTTAKPTMTPTSTPTKTTTTSTA) form a disordered region. Low complexity predominate over residues 72 to 98 (TPSTTTTAKPTMTPTSTPTKTTTTSTA). 2 consecutive LysM domains span residues 126–172 (KFHL…YVCV) and 204–250 (KFHL…YVCI).

Belongs to the secreted LysM effector family.

Its subcellular location is the secreted. The protein resides in the cell wall. Functionally, secreted effector that binds two substrates, chitin and N-linked oligosaccharides associated with human skin glycoproteins. Could provide the pathogen with three important functions including shielding host cell wall chitin from the human immune system, shielding the pathogen's glycoproteins from host degradation and immune surveillance, and helping facilitate pathogen adhesion to human skin. The chain is Secreted LysM effector LysM1 from Trichophyton rubrum (strain ATCC MYA-4607 / CBS 118892) (Athlete's foot fungus).